The primary structure comprises 377 residues: Endoplasmic reticulum-Golgi intermediate compartment protein 2 (377 aa).

Residues 1-33 lie on the Cytoplasmic side of the membrane; it reads MRRLNRKKTLSLVKELDAFPKVPESYVETSASG. A helical transmembrane segment spans residues 34–54; sequence GTVSLIAFTTMALLTIMEFSV. Residues 55-319 are Lumenal-facing; sequence YQDTWMKYEY…PFWQFFVRLC (265 aa). A helical transmembrane segment spans residues 320 to 340; that stretch reads GIVGGIFSTTGMLHGIGKFIV. The Cytoplasmic segment spans residues 341 to 377; that stretch reads EIICCRFRLGSYKPVNSVPFEDGHTDNHLPLLENNTH.

This sequence belongs to the ERGIC family. May form a heteromeric complex composed of ERGIC1, ERGIC2 and ERGIC3. Interacts with ERGIC3, the interaction is required for the stable expression of both proteins. May interact with EEF1A1. As to expression, ubiquitously expressed.

Its subcellular location is the endoplasmic reticulum-Golgi intermediate compartment membrane. It localises to the golgi apparatus. The protein resides in the cis-Golgi network membrane. The protein localises to the endoplasmic reticulum membrane. It is found in the cytoplasm. Its subcellular location is the nucleus. Possible role in transport between endoplasmic reticulum and Golgi. The polypeptide is Endoplasmic reticulum-Golgi intermediate compartment protein 2 (ERGIC2) (Homo sapiens (Human)).